Here is a 911-residue protein sequence, read N- to C-terminus: Valine--tRNA ligase (911 aa).

The short motif at 57 to 67 (PTVSGSLHVGH) is the 'HIGH' region element. The short motif at 599–603 (KMSKS) is the 'KMSKS' region element. Lys-602 contributes to the ATP binding site. Residues 882–911 (EESAAEDAPETEVAVEASELGEPPAKKPKH) are disordered.

Belongs to the class-I aminoacyl-tRNA synthetase family. ValS type 2 subfamily. Monomer.

The protein localises to the cytoplasm. It carries out the reaction tRNA(Val) + L-valine + ATP = L-valyl-tRNA(Val) + AMP + diphosphate. Catalyzes the attachment of valine to tRNA(Val). As ValRS can inadvertently accommodate and process structurally similar amino acids such as threonine, to avoid such errors, it has a 'posttransfer' editing activity that hydrolyzes mischarged Thr-tRNA(Val) in a tRNA-dependent manner. This is Valine--tRNA ligase from Bifidobacterium longum (strain DJO10A).